Consider the following 188-residue polypeptide: Biogenesis of lysosome-related organelles complex 1 subunit 5 (188 aa).

Positions 1 to 24 (MSSSSSSSSPVKSTGSPFIQSLKP) are disordered. The span at 10–19 (PVKSTGSPFI) shows a compositional bias: polar residues. Positions 101 to 183 (MQDQLASVLK…QYVTMDKELS (83 aa)) form a coiled coil.

It belongs to the BLOC1S5 family. As to quaternary structure, component of the biogenesis of lysosome-related organelles complex 1 (BLOC-1).

Its function is as follows. Component of the BLOC-1 complex, a complex that is required for normal biogenesis of lysosome-related organelles (LRO), such as platelet dense granules and melanosomes. Plays a role in intracellular vesicle trafficking. The polypeptide is Biogenesis of lysosome-related organelles complex 1 subunit 5 (bloc1s5) (Xenopus laevis (African clawed frog)).